The sequence spans 366 residues: Homer protein homolog 1 (366 aa).

The region spanning 1 to 110 is the WH1 domain; the sequence is MGEQPIFSTR…EKFQEFKEAA (110 aa). Glycine 2 is modified (N-acetylglycine). Residues 114 to 189 are disordered; the sequence is KEKSQEKMEL…RTQGLSHASS (76 aa). A compositionally biased stretch (polar residues) spans 138 to 147; that stretch reads SPLTPESING. Residues 193–364 are a coiled coil; that stretch reads KHWEAELATL…LRDNLAKLLE (172 aa). Residues 302–366 are required for tetramerization; the sequence is KLQEVEIRNK…DNLAKLLECS (65 aa). At serine 318 the chain carries Phosphoserine.

It belongs to the Homer family. In terms of assembly, tetramer; this tetrameric structure is critical for forming the high-order complex with SHANK1, which in turn is necessary for the structural and functional integrity of dendritic spines. Interacts with GRM1, GRM5, ITPR1, DYN3, RYR1, RYR2 and SHANK3. Interacts with IFT57 and OPHN1. Isoform 1 and isoform 2 encode coiled-coil structures that mediate homo- and heteromultimerization. Interacts with SHANK1; forms high-order polymerized complex with a mesh-like network structure, at least composed of SHANK1, HOMER1 and DLGAP1; the complex formation is SHANK1 multimerization dependent. Interacts with NFATC4. Interacts with DAGLA (via PPXXF motif); this interaction is required for the cell membrane localization of DAGLA. Interacts with SRGAP2. Highly expressed in cortex, Purkinje cells of the cerebellum, hippocampus, striatum and olfactory bulb. Isoform 1 and isoform 3 are expressed in skeletal and cardiac muscle.

It localises to the cytoplasm. The protein resides in the postsynaptic density. The protein localises to the synapse. Its subcellular location is the cell projection. It is found in the dendritic spine. Functionally, postsynaptic density scaffolding protein. Binds and cross-links cytoplasmic regions of GRM1, GRM5, ITPR1, DNM3, RYR1, RYR2, SHANK1 and SHANK3. By physically linking GRM1 and GRM5 with ER-associated ITPR1 receptors, it aids the coupling of surface receptors to intracellular calcium release. May also couple GRM1 to PI3 kinase through its interaction with AGAP2. Differentially regulates the functions of the calcium activated channel ryanodine receptors RYR1 and RYR2. Isoform 1 decreases the activity of RYR2, and increases the activity of RYR1, whereas isoform 3 counteracts the effects by competing for binding sites. Isoform 1 regulates the trafficking and surface expression of GRM5. Isoform 3 acts as a natural dominant negative, in dynamic competition with constitutively expressed isoform 1, and isoform 2 to regulate synaptic metabotropic glutamate function. Isoform 3, may be involved in the structural changes that occur at synapses during long-lasting neuronal plasticity and development. Forms a high-order complex with SHANK1, which in turn is necessary for the structural and functional integrity of dendritic spines. Negatively regulates T cell activation by inhibiting the calcineurin-NFAT pathway. Acts by competing with calcineurin/PPP3CA for NFAT protein binding, hence preventing NFAT activation by PPP3CA. The sequence is that of Homer protein homolog 1 from Rattus norvegicus (Rat).